Consider the following 303-residue polypeptide: Glutaminase (303 aa).

Residues serine 61, asparagine 111, glutamate 155, asparagine 162, tyrosine 186, tyrosine 238, and valine 256 each contribute to the substrate site.

This sequence belongs to the glutaminase family. As to quaternary structure, homotetramer.

It carries out the reaction L-glutamine + H2O = L-glutamate + NH4(+). In Marinomonas sp. (strain MWYL1), this protein is Glutaminase.